Consider the following 261-residue polypeptide: (R)-S-adenosyl-L-methionine hydrolase (261 aa).

Positions 12, 72, and 187 each coordinate adenosine. The (R)-S-adenosyl-L-methionine site is built by Asn-187, Ser-231, and Val-239. Val-239 provides a ligand contact to adenosine.

This sequence belongs to the SAM hydrolase / SAM-dependent halogenase family.

The enzyme catalyses (R)-S-adenosyl-L-methionine + H2O = adenosine + L-methionine + H(+). With respect to regulation, activity is inhibited by chloride. Its function is as follows. Catalyzes the hydrolysis of S-adenosyl-L-methionine (SAM) into adenosine and L-methionine. Is likely stereoselective, specifically hydrolyzing (R)-S-adenosyl-L-methionine ((R)-SAM), the inactive form of the ubiquitous cofactor SAM, and not the active form of SAM, (S)-S-adenosyl-L-methionine. Probaly plays a role in preventing accumulation of (R)-S-adenosyl-L-methionine in cells; maintenance of (S)-S-denosyl-L-methionine homochirality is important for cellular health given that the (R)-form is largely inactive as a methyl donor and can function as an inhibitor of methyltransferases. Shows very slow iodinase activity in vitro. This Salinispora arenicola (strain CNS-205) protein is (R)-S-adenosyl-L-methionine hydrolase.